A 487-amino-acid chain; its full sequence is Diacylglycerol kinase 4 (487 aa).

Residues 86-242 enclose the DAGKc domain; that stretch reads TPEVPLMVFV…LDSWNILITM (157 aa).

This sequence belongs to the eukaryotic diacylglycerol kinase family. Monomer. In terms of tissue distribution, highly expressed in pollen grains. Expressed in roots, hypocotyls, leaf vasculature, developing anthers and stigmas, and receptacles of siliques.

The protein localises to the endoplasmic reticulum. Its subcellular location is the cytoplasm. The protein resides in the cytosol. It catalyses the reaction a 1,2-diacyl-sn-glycerol + ATP = a 1,2-diacyl-sn-glycero-3-phosphate + ADP + H(+). Phosphorylates the second messenger diacylglycerol (DAG) to generate phosphatidic acid (PA), another important signaling molecule. PA is required for plant development and responses to abiotic stress and pathogen attack. May be involved in the accumulation of PA during cold stress. Involved in the regulation of PA and phosphatidylcholine biosynthesis in growing pollen tubes. Required for nitric oxide-dependent pollen tube growth and re-orientation responses. Functions together with DGK2 in male gametophyte development and biosynthesis of phosphatidylglycerol and phosphatidylinositol in the endoplasmic reticulum (ER). Involved in PA production for pollen grain growth, as well as leaf and root growth. Possesses guanylyl cyclase activity in vitro. The sequence is that of Diacylglycerol kinase 4 from Arabidopsis thaliana (Mouse-ear cress).